A 171-amino-acid chain; its full sequence is ATP synthase subunit delta (171 aa).

The protein belongs to the ATPase delta chain family. As to quaternary structure, F-type ATPases have 2 components, F(1) - the catalytic core - and F(0) - the membrane proton channel. F(1) has five subunits: alpha(3), beta(3), gamma(1), delta(1), epsilon(1). F(0) has three main subunits: a(1), b(2) and c(10-14). The alpha and beta chains form an alternating ring which encloses part of the gamma chain. F(1) is attached to F(0) by a central stalk formed by the gamma and epsilon chains, while a peripheral stalk is formed by the delta and b chains.

It localises to the cell membrane. Its function is as follows. F(1)F(0) ATP synthase produces ATP from ADP in the presence of a proton or sodium gradient. F-type ATPases consist of two structural domains, F(1) containing the extramembraneous catalytic core and F(0) containing the membrane proton channel, linked together by a central stalk and a peripheral stalk. During catalysis, ATP synthesis in the catalytic domain of F(1) is coupled via a rotary mechanism of the central stalk subunits to proton translocation. In terms of biological role, this protein is part of the stalk that links CF(0) to CF(1). It either transmits conformational changes from CF(0) to CF(1) or is implicated in proton conduction. This is ATP synthase subunit delta from Acholeplasma laidlawii (strain PG-8A).